The sequence spans 241 residues: Phosphoribosylaminoimidazole-succinocarboxamide synthase (241 aa).

It belongs to the SAICAR synthetase family.

It carries out the reaction 5-amino-1-(5-phospho-D-ribosyl)imidazole-4-carboxylate + L-aspartate + ATP = (2S)-2-[5-amino-1-(5-phospho-beta-D-ribosyl)imidazole-4-carboxamido]succinate + ADP + phosphate + 2 H(+). Its pathway is purine metabolism; IMP biosynthesis via de novo pathway; 5-amino-1-(5-phospho-D-ribosyl)imidazole-4-carboxamide from 5-amino-1-(5-phospho-D-ribosyl)imidazole-4-carboxylate: step 1/2. The chain is Phosphoribosylaminoimidazole-succinocarboxamide synthase from Lacticaseibacillus casei (strain BL23) (Lactobacillus casei).